A 79-amino-acid chain; its full sequence is Small ribosomal subunit protein bS18 (79 aa).

It belongs to the bacterial ribosomal protein bS18 family. In terms of assembly, part of the 30S ribosomal subunit. Forms a tight heterodimer with protein bS6.

In terms of biological role, binds as a heterodimer with protein bS6 to the central domain of the 16S rRNA, where it helps stabilize the platform of the 30S subunit. The polypeptide is Small ribosomal subunit protein bS18 (Onion yellows phytoplasma (strain OY-M)).